A 486-amino-acid chain; its full sequence is Cardiolipin synthase A (486 aa).

2 helical membrane passes run 3–23 (TVYT…IAGV) and 38–58 (MAWL…YLAV). PLD phosphodiesterase domains follow at residues 219–246 (MDLR…VDPR) and 399–426 (EGGL…DMRS). Active-site residues include His-224, Lys-226, Asp-231, His-404, Lys-406, and Asp-411.

It belongs to the phospholipase D family. Cardiolipin synthase subfamily. ClsA sub-subfamily.

It is found in the cell inner membrane. The enzyme catalyses 2 a 1,2-diacyl-sn-glycero-3-phospho-(1'-sn-glycerol) = a cardiolipin + glycerol. In terms of biological role, catalyzes the reversible phosphatidyl group transfer from one phosphatidylglycerol molecule to another to form cardiolipin (CL) (diphosphatidylglycerol) and glycerol. The chain is Cardiolipin synthase A from Shigella flexneri.